The following is a 496-amino-acid chain: PE-PGRS family protein PE_PGRS1 (496 aa).

A PE domain is found at L4–N94. Residues L461–G480 form a disordered region.

This sequence belongs to the mycobacterial PE family. PGRS subfamily.

The protein localises to the secreted. The protein resides in the cell wall. It is found in the host mitochondrion. Functionally, when expressed in host mitochondria, induces mitochondrial stress which results in mitochondrial membrane depolarization, up-regulation of mitochondrial superoxides and release of cytochrome-C in the cytoplasm. The cytochrome-C in cytoplasm triggers the activation of caspase-9, caspase-3 and caspase-7, leading to the apoptosis of host macrophages. Being a late expressing protein, apoptosis induction by PE_PGRS1 may facilitate the M.tuberculosis survival and silent expansion of its niche at the site of granuloma. In terms of biological role, when expressed in THP-1 macrophages, promotes the survival of mycobacteria within macrophages after a 24- to 48-hour infection by blocking endoplasmic reticulum stress and inhibiting host cell apoptosis. Can chelate excessive intracellular calcium in THP-1 macrophages, which reduces the concentration of intracellular free Ca(2+) and blocks the PERK-eIF2alpha-ATF4 axis, thereby inhibiting the endoplasmic reticulum stress caused by infection. It also reduces the apoptosis of THP-1 macrophages by decreasing the activation of caspase-3 and caspase-9. The sequence is that of PE-PGRS family protein PE_PGRS1 from Mycobacterium tuberculosis (strain ATCC 25618 / H37Rv).